A 173-amino-acid chain; its full sequence is Crossover junction endodeoxyribonuclease RuvC (173 aa).

Active-site residues include aspartate 8, glutamate 67, and aspartate 139. Residues aspartate 8, glutamate 67, and aspartate 139 each coordinate Mg(2+).

It belongs to the RuvC family. In terms of assembly, homodimer which binds Holliday junction (HJ) DNA. The HJ becomes 2-fold symmetrical on binding to RuvC with unstacked arms; it has a different conformation from HJ DNA in complex with RuvA. In the full resolvosome a probable DNA-RuvA(4)-RuvB(12)-RuvC(2) complex forms which resolves the HJ. Mg(2+) is required as a cofactor.

It localises to the cytoplasm. It carries out the reaction Endonucleolytic cleavage at a junction such as a reciprocal single-stranded crossover between two homologous DNA duplexes (Holliday junction).. In terms of biological role, the RuvA-RuvB-RuvC complex processes Holliday junction (HJ) DNA during genetic recombination and DNA repair. Endonuclease that resolves HJ intermediates. Cleaves cruciform DNA by making single-stranded nicks across the HJ at symmetrical positions within the homologous arms, yielding a 5'-phosphate and a 3'-hydroxyl group; requires a central core of homology in the junction. The consensus cleavage sequence is 5'-(A/T)TT(C/G)-3'. Cleavage occurs on the 3'-side of the TT dinucleotide at the point of strand exchange. HJ branch migration catalyzed by RuvA-RuvB allows RuvC to scan DNA until it finds its consensus sequence, where it cleaves and resolves the cruciform DNA. The polypeptide is Crossover junction endodeoxyribonuclease RuvC (Shewanella baltica (strain OS223)).